The sequence spans 217 residues: Putative threonylcarbamoyl-AMP synthase (217 aa).

One can recognise a YrdC-like domain in the interval S14 to V199.

This sequence belongs to the SUA5 family.

It is found in the cytoplasm. The enzyme catalyses L-threonine + hydrogencarbonate + ATP = L-threonylcarbamoyladenylate + diphosphate + H2O. Required for the formation of a threonylcarbamoyl group on adenosine at position 37 (t(6)A37) in tRNAs that read codons beginning with adenine. Catalyzes the conversion of L-threonine, HCO(3)(-)/CO(2) and ATP to give threonylcarbamoyl-AMP (TC-AMP) as the acyladenylate intermediate, with the release of diphosphate. The sequence is that of Putative threonylcarbamoyl-AMP synthase from Mycobacterium tuberculosis (strain CDC 1551 / Oshkosh).